The primary structure comprises 289 residues: D-alanine aminotransferase (289 aa).

Tyr31 is a substrate binding site. Arg50 lines the pyridoxal 5'-phosphate pocket. Positions 99 and 101 each coordinate substrate. Lys147 carries the N6-(pyridoxal phosphate)lysine modification. Position 179 (Glu179) interacts with pyridoxal 5'-phosphate.

It belongs to the class-IV pyridoxal-phosphate-dependent aminotransferase family. As to quaternary structure, homodimer. It depends on pyridoxal 5'-phosphate as a cofactor.

It carries out the reaction D-alanine + 2-oxoglutarate = D-glutamate + pyruvate. Its function is as follows. Acts on the D-isomers of alanine, leucine, aspartate, glutamate, aminobutyrate, norvaline and asparagine. The enzyme transfers an amino group from a substrate D-amino acid to the pyridoxal phosphate cofactor to form pyridoxamine and an alpha-keto acid in the first half-reaction. The second half-reaction is the reverse of the first, transferring the amino group from the pyridoxamine to a second alpha-keto acid to form the product D-amino acid via a ping-pong mechanism. This is an important process in the formation of D-alanine and D-glutamate, which are essential bacterial cell wall components. This is D-alanine aminotransferase (dat) from Listeria monocytogenes serovar 1/2a (strain ATCC BAA-679 / EGD-e).